The chain runs to 408 residues: Epsin-3 (408 aa).

Serine 2 bears the N-acetylserine mark. One can recognise an ENTH domain in the interval 24–157 (NVVFNYTEME…SDDNKIRAER (134 aa)). The segment at 162–182 (ETAKKYKGVAGGSASADGSLN) is disordered. Residues serine 196, serine 198, serine 203, serine 212, and serine 223 each carry the phosphoserine modification. Disordered stretches follow at residues 199–322 (ADFD…ITPA) and 338–408 (TAKA…LLSF). A compositionally biased stretch (acidic residues) spans 201–210 (FDSDNEDNED). Residues 211 to 231 (GSFSQNGYNDNASRATSTPGQ) are compositionally biased toward polar residues. Positions 249–263 (KPSKELIQEDEKKAD) are enriched in basic and acidic residues. Over residues 264 to 273 (EEEDDDDEFS) the composition is skewed to acidic residues. Residues 279–317 (VPVTNPANSFNLLNTSPIEGMPATTSSMPFYNSSTTDQG) are compositionally biased toward polar residues. The segment covering 338–361 (TAKASAEAPSAPKASQAKAAASNP) has biased composition (low complexity). 2 stretches are compositionally biased toward polar residues: residues 362–371 (VSNSTTALST) and 388–398 (QQEQNTNNNHT). Residues 399–408 (SSKEIDLLSF) show a composition bias toward basic and acidic residues.

In terms of assembly, interacts with the clathrin adapter GGA2, and VPS27.

It is found in the cytoplasm. The protein resides in the golgi apparatus. The protein localises to the trans-Golgi network membrane. Its subcellular location is the cytoplasmic vesicle. It localises to the clathrin-coated vesicle membrane. Functionally, involved in the recruitment of clathrin to the Golgi network and endosomes to form clathrin coated vesicles. Plays a role in the trafficking of clathrin between the Golgi network and endosomes. Binds to membranes enriched in phosphatidylinositol-3,5-bisphosphate (PtdIns(3,5)P2) and, in association with VPS27, is involved in protein sorting at the multivesicular body (MVB). This Saccharomyces cerevisiae (strain ATCC 204508 / S288c) (Baker's yeast) protein is Epsin-3 (ENT3).